Here is a 426-residue protein sequence, read N- to C-terminus: MVRDIEDEIRDEKNPRPLDEDDIALLKTYGLGPYSAPIKKVEKEIKDLAKKINDLCGIKESDTGLAPPSQWDLVSDKQMMQEEQPLQVARCTKIISPNTEDAKYVINVKQIAKFVVGLGDKVSPTDIEEGMRVGVDRNKYQIQIPLPPKIDPSVTMMTVEEKPDVTYNDVGGCKEQIEKMREVVELPMLHPEKFVKLGIDPPKGVLCYGPPGTGKTLLARAVANRTDACFIRVIGSELVQKYVGEGARMVRELFQMARSKKACIVFFDEVDAIGGARFDDGVGGDNEVQRTMLEIVNQLDGFDARGNIKVLMATNRPDTLDPALLRPGRLDRKVEFGLPDLESRTQIFKIHTRTMNCERDIRFELLARLCPNSTGADIRSVCTEAGMYAIRARRKTVTEKDFLDAVNKVIKGYQKFSATPKYMVYN.

Position 209-216 (209-216 (GPPGTGKT)) interacts with ATP. Residues Lys400 and Lys415 each participate in a glycyl lysine isopeptide (Lys-Gly) (interchain with G-Cter in ubiquitin) cross-link.

Belongs to the AAA ATPase family. As to quaternary structure, component of the 19S regulatory particle (RP/PA700) base subcomplex of the 26S proteasome. The 26S proteasome is composed of a core protease (CP), known as the 20S proteasome, capped at one or both ends by the 19S regulatory particle (RP/PA700). The RP/PA700 complex is composed of at least 17 different subunits in two subcomplexes, the base and the lid, which form the portions proximal and distal to the 20S proteolytic core, respectively.

Its subcellular location is the cytoplasm. It localises to the nucleus. In terms of biological role, the 26S proteasome is involved in the ATP-dependent degradation of ubiquitinated proteins. The regulatory (or ATPase) complex confers ATP dependency and substrate specificity to the 26S complex. This Arabidopsis thaliana (Mouse-ear cress) protein is 26S proteasome regulatory subunit 7 homolog A (RPT1A).